Here is a 328-residue protein sequence, read N- to C-terminus: Biotin synthase (328 aa).

One can recognise a Radical SAM core domain in the interval 50–277 (FGDQVHLCCI…GKEIVICGGR (228 aa)). Positions 67, 71, and 74 each coordinate [4Fe-4S] cluster. Ser111, Cys142, and Cys202 together coordinate [2Fe-2S] cluster.

This sequence belongs to the radical SAM superfamily. Biotin synthase family. Homodimer. [4Fe-4S] cluster is required as a cofactor. It depends on [2Fe-2S] cluster as a cofactor.

The catalysed reaction is (4R,5S)-dethiobiotin + (sulfur carrier)-SH + 2 reduced [2Fe-2S]-[ferredoxin] + 2 S-adenosyl-L-methionine = (sulfur carrier)-H + biotin + 2 5'-deoxyadenosine + 2 L-methionine + 2 oxidized [2Fe-2S]-[ferredoxin]. It functions in the pathway cofactor biosynthesis; biotin biosynthesis; biotin from 7,8-diaminononanoate: step 2/2. Catalyzes the conversion of dethiobiotin (DTB) to biotin by the insertion of a sulfur atom into dethiobiotin via a radical-based mechanism. The polypeptide is Biotin synthase (Desulfatibacillum aliphaticivorans).